The chain runs to 339 residues: Ketol-acid reductoisomerase (NADP(+)) (339 aa).

The 182-residue stretch at 1 to 182 (MRVYYDRDAD…GGGRSGVIET (182 aa)) folds into the KARI N-terminal Rossmann domain. Residues 24–27 (YGSQ), Arg-48, Ser-51, Thr-53, and 83–86 (DELQ) each bind NADP(+). Residue His-108 is part of the active site. An NADP(+)-binding site is contributed by Gly-134. The 146-residue stretch at 183-328 (TFKEECETDL…GKLRAMMPWI (146 aa)) folds into the KARI C-terminal knotted domain. Residues Asp-191, Glu-195, Glu-227, and Glu-231 each contribute to the Mg(2+) site. Ser-252 contacts substrate.

This sequence belongs to the ketol-acid reductoisomerase family. The cofactor is Mg(2+).

The enzyme catalyses (2R)-2,3-dihydroxy-3-methylbutanoate + NADP(+) = (2S)-2-acetolactate + NADPH + H(+). It catalyses the reaction (2R,3R)-2,3-dihydroxy-3-methylpentanoate + NADP(+) = (S)-2-ethyl-2-hydroxy-3-oxobutanoate + NADPH + H(+). It participates in amino-acid biosynthesis; L-isoleucine biosynthesis; L-isoleucine from 2-oxobutanoate: step 2/4. The protein operates within amino-acid biosynthesis; L-valine biosynthesis; L-valine from pyruvate: step 2/4. Involved in the biosynthesis of branched-chain amino acids (BCAA). Catalyzes an alkyl-migration followed by a ketol-acid reduction of (S)-2-acetolactate (S2AL) to yield (R)-2,3-dihydroxy-isovalerate. In the isomerase reaction, S2AL is rearranged via a Mg-dependent methyl migration to produce 3-hydroxy-3-methyl-2-ketobutyrate (HMKB). In the reductase reaction, this 2-ketoacid undergoes a metal-dependent reduction by NADPH to yield (R)-2,3-dihydroxy-isovalerate. This Brucella melitensis biotype 2 (strain ATCC 23457) protein is Ketol-acid reductoisomerase (NADP(+)).